Reading from the N-terminus, the 89-residue chain is Gibberellin-regulated protein 10 (89 aa).

The first 25 residues, 1–25 (MKFPAVKVLIISLLITSSLFILSTA), serve as a signal peptide directing secretion.

The protein belongs to the GASA family. Post-translationally, six disulfide bonds may be present. As to expression, expressed in vasculature of rosette leaves and roots, cotyledon and root tips and developing seeds.

Its subcellular location is the secreted. Its function is as follows. Gibberellin-regulated protein that may function in hormonal controlled steps of development such as seed germination, flowering and seed maturation. The polypeptide is Gibberellin-regulated protein 10 (GASA10) (Arabidopsis thaliana (Mouse-ear cress)).